Here is a 96-residue protein sequence, read N- to C-terminus: Secreted RxLR effector protein 123 (96 aa).

Positions 1–22 are cleaved as a signal peptide; the sequence is MVGAYYVGIALLVAGGSQTAAG. A RxLR-dEER motif is present at residues 49–70; the sequence is RFLRKSRNPKDNLMLSEANEER. Residues 57–96 form a disordered region; that stretch reads PKDNLMLSEANEERTPSSPSNSLTEFIVSEPITTNVMRTE. The span at 87-96 shows a compositional bias: polar residues; it reads PITTNVMRTE.

It belongs to the RxLR effector family.

The protein localises to the secreted. It is found in the host nucleus. The protein resides in the host cytoplasm. Functionally, secreted effector that dos not suppress the host cell death induced by cell death-inducing proteins. The sequence is that of Secreted RxLR effector protein 123 from Plasmopara viticola (Downy mildew of grapevine).